We begin with the raw amino-acid sequence, 429 residues long: Histidine--tRNA ligase (429 aa).

The protein belongs to the class-II aminoacyl-tRNA synthetase family. In terms of assembly, homodimer.

The protein resides in the cytoplasm. The catalysed reaction is tRNA(His) + L-histidine + ATP = L-histidyl-tRNA(His) + AMP + diphosphate + H(+). The protein is Histidine--tRNA ligase of Streptococcus pneumoniae (strain 70585).